A 267-amino-acid chain; its full sequence is 4-hydroxy-tetrahydrodipicolinate reductase (267 aa).

NAD(+) is bound by residues 9-14 (GASGRM) and aspartate 35. An NADP(+)-binding site is contributed by arginine 36. NAD(+)-binding positions include 98–100 (GTT) and 122–125 (ASNF). The active-site Proton donor/acceptor is the histidine 155. Histidine 156 is a binding site for (S)-2,3,4,5-tetrahydrodipicolinate. The active-site Proton donor is the lysine 159. 165–166 (GT) contacts (S)-2,3,4,5-tetrahydrodipicolinate.

Belongs to the DapB family.

It is found in the cytoplasm. It carries out the reaction (S)-2,3,4,5-tetrahydrodipicolinate + NAD(+) + H2O = (2S,4S)-4-hydroxy-2,3,4,5-tetrahydrodipicolinate + NADH + H(+). The catalysed reaction is (S)-2,3,4,5-tetrahydrodipicolinate + NADP(+) + H2O = (2S,4S)-4-hydroxy-2,3,4,5-tetrahydrodipicolinate + NADPH + H(+). It participates in amino-acid biosynthesis; L-lysine biosynthesis via DAP pathway; (S)-tetrahydrodipicolinate from L-aspartate: step 4/4. In terms of biological role, catalyzes the conversion of 4-hydroxy-tetrahydrodipicolinate (HTPA) to tetrahydrodipicolinate. In Chromobacterium violaceum (strain ATCC 12472 / DSM 30191 / JCM 1249 / CCUG 213 / NBRC 12614 / NCIMB 9131 / NCTC 9757 / MK), this protein is 4-hydroxy-tetrahydrodipicolinate reductase.